The primary structure comprises 470 residues: Siroheme synthase (470 aa).

The precorrin-2 dehydrogenase /sirohydrochlorin ferrochelatase stretch occupies residues 1-213; that stretch reads MSDATDPGWF…GEHAAARQVL (213 aa). NAD(+) is bound by residues 28–29 and 49–50; these read GI and PR. The uroporphyrinogen-III C-methyltransferase stretch occupies residues 224–470; sequence GEVWLVGAGP…VVTPPPLSGT (247 aa). Pro233 is an S-adenosyl-L-methionine binding site. Asp256 (proton acceptor) is an active-site residue. Lys278 functions as the Proton donor in the catalytic mechanism. S-adenosyl-L-methionine contacts are provided by residues 309–311, Ile314, 339–340, Met392, and Gly421; these read GGD and TA.

This sequence in the N-terminal section; belongs to the precorrin-2 dehydrogenase / sirohydrochlorin ferrochelatase family. It in the C-terminal section; belongs to the precorrin methyltransferase family.

The enzyme catalyses uroporphyrinogen III + 2 S-adenosyl-L-methionine = precorrin-2 + 2 S-adenosyl-L-homocysteine + H(+). It catalyses the reaction precorrin-2 + NAD(+) = sirohydrochlorin + NADH + 2 H(+). It carries out the reaction siroheme + 2 H(+) = sirohydrochlorin + Fe(2+). It functions in the pathway cofactor biosynthesis; adenosylcobalamin biosynthesis; precorrin-2 from uroporphyrinogen III: step 1/1. The protein operates within cofactor biosynthesis; adenosylcobalamin biosynthesis; sirohydrochlorin from precorrin-2: step 1/1. Its pathway is porphyrin-containing compound metabolism; siroheme biosynthesis; precorrin-2 from uroporphyrinogen III: step 1/1. It participates in porphyrin-containing compound metabolism; siroheme biosynthesis; siroheme from sirohydrochlorin: step 1/1. It functions in the pathway porphyrin-containing compound metabolism; siroheme biosynthesis; sirohydrochlorin from precorrin-2: step 1/1. Multifunctional enzyme that catalyzes the SAM-dependent methylations of uroporphyrinogen III at position C-2 and C-7 to form precorrin-2 via precorrin-1. Then it catalyzes the NAD-dependent ring dehydrogenation of precorrin-2 to yield sirohydrochlorin. Finally, it catalyzes the ferrochelation of sirohydrochlorin to yield siroheme. The sequence is that of Siroheme synthase from Gluconacetobacter diazotrophicus (strain ATCC 49037 / DSM 5601 / CCUG 37298 / CIP 103539 / LMG 7603 / PAl5).